The following is a 225-amino-acid chain: Ribonuclease 3 (225 aa).

Positions 7–129 (IPRLCRTLGY…IIGAIYLDSD (123 aa)) constitute an RNase III domain. Glutamate 42 serves as a coordination point for Mg(2+). Aspartate 46 is a catalytic residue. 2 residues coordinate Mg(2+): aspartate 115 and glutamate 118. The active site involves glutamate 118. Residues 155-225 (DPKTLLQEHL…AAQVLELIKK (71 aa)) enclose the DRBM domain.

The protein belongs to the ribonuclease III family. Homodimer. The cofactor is Mg(2+).

Its subcellular location is the cytoplasm. The enzyme catalyses Endonucleolytic cleavage to 5'-phosphomonoester.. Its function is as follows. Digests double-stranded RNA. Involved in the processing of primary rRNA transcript to yield the immediate precursors to the large and small rRNAs (23S and 16S). Processes some mRNAs, and tRNAs when they are encoded in the rRNA operon. Processes pre-crRNA and tracrRNA of type II CRISPR loci if present in the organism. The chain is Ribonuclease 3 from Shewanella piezotolerans (strain WP3 / JCM 13877).